A 288-amino-acid polypeptide reads, in one-letter code: Cytochrome b-c1 complex catalytic subunit, mitochondrial (288 aa).

The helical transmembrane segment at 12-34 threads the bilayer; it reads SMVQKFIAGGVGVTGLTASYLLY. Residues 69–222 form the Cytochrome c domain; it reads ASIRRGFQVY…DLVEYEDGTP (154 aa). Heme c-binding residues include Cys82, Cys85, and His86. Positions 111–121 are enriched in acidic residues; the sequence is EELEYDDEPDD. A disordered region spans residues 111–138; sequence EELEYDDEPDDEGKPRKRPGKLADYIPG. Residues 250–268 traverse the membrane as a helical segment; sequence WGLKALVVLSSLYLLSIWV.

This sequence belongs to the cytochrome c family. Component of the ubiquinol-cytochrome c oxidoreductase (cytochrome b-c1 complex, complex III, CIII), a multisubunit enzyme composed of 10 subunits. The complex is composed of 3 respiratory subunits cytochrome b (COB), cytochrome c1 (CYT1) and Rieske protein (RIP1), 2 core protein subunits COR1 and QCR2, and 5 low-molecular weight protein subunits QCR6, QCR7, QCR8, QCR9 and QCR10. The complex exists as an obligatory dimer and forms supercomplexes (SCs) in the inner mitochondrial membrane with a monomer or a dimer of cytochrome c oxidase (complex IV, CIV), resulting in 2 different assemblies (supercomplexes III(2)IV and III(2)IV(2)). The cofactor is heme c.

It localises to the mitochondrion inner membrane. It carries out the reaction a quinol + 2 Fe(III)-[cytochrome c](out) = a quinone + 2 Fe(II)-[cytochrome c](out) + 2 H(+)(out). Its function is as follows. Component of the ubiquinol-cytochrome c oxidoreductase, a multisubunit transmembrane complex that is part of the mitochondrial electron transport chain which drives oxidative phosphorylation. The complex plays an important role in the uptake of multiple carbon sources present in different host niches. This chain is Cytochrome b-c1 complex catalytic subunit, mitochondrial, found in Candida albicans (strain SC5314 / ATCC MYA-2876) (Yeast).